Reading from the N-terminus, the 238-residue chain is Protein FEV (238 aa).

Residues 47–127 constitute a DNA-binding region (ETS); the sequence is IQLWQFLLEL…HGKRYAYRFD (81 aa). The interval 129 to 238 is may mediate active transcriptional repression; that stretch reads QGLAQACQPP…AASHLGGHYH (110 aa).

Belongs to the ETS family. As to expression, in brain, exclusively expressed in the major serotonergic neurons of the dorsal and median raphe nuclei located in the midbrain and pons. Also detected in prostate and small intestine.

It localises to the nucleus. In terms of biological role, functions as a transcriptional regulator. According to PubMed:12761502, it functions as a transcriptional repressor. Functions in the differentiation and the maintenance of the central serotonergic neurons. May play a role in cell growth. The chain is Protein FEV (FEV) from Homo sapiens (Human).